We begin with the raw amino-acid sequence, 106 residues long: UPF0145 protein VCM66_A0911 (106 aa).

It belongs to the UPF0145 family.

In Vibrio cholerae serotype O1 (strain M66-2), this protein is UPF0145 protein VCM66_A0911.